Here is a 123-residue protein sequence, read N- to C-terminus: uncharacterized protein (123 aa).

2 disordered regions span residues 1–21 and 82–123; these read MGAPGGKINRPRTELKKKLFK and EKTA…EDES.

This is an uncharacterized protein from Homo sapiens (Human).